A 182-amino-acid polypeptide reads, in one-letter code: Crossover junction endodeoxyribonuclease RuvC (182 aa).

Catalysis depends on residues Asp7, Glu69, and Asp141. Mg(2+) is bound by residues Asp7, Glu69, and Asp141.

Belongs to the RuvC family. As to quaternary structure, homodimer which binds Holliday junction (HJ) DNA. The HJ becomes 2-fold symmetrical on binding to RuvC with unstacked arms; it has a different conformation from HJ DNA in complex with RuvA. In the full resolvosome a probable DNA-RuvA(4)-RuvB(12)-RuvC(2) complex forms which resolves the HJ. It depends on Mg(2+) as a cofactor.

It localises to the cytoplasm. It catalyses the reaction Endonucleolytic cleavage at a junction such as a reciprocal single-stranded crossover between two homologous DNA duplexes (Holliday junction).. Functionally, the RuvA-RuvB-RuvC complex processes Holliday junction (HJ) DNA during genetic recombination and DNA repair. Endonuclease that resolves HJ intermediates. Cleaves cruciform DNA by making single-stranded nicks across the HJ at symmetrical positions within the homologous arms, yielding a 5'-phosphate and a 3'-hydroxyl group; requires a central core of homology in the junction. The consensus cleavage sequence is 5'-(A/T)TT(C/G)-3'. Cleavage occurs on the 3'-side of the TT dinucleotide at the point of strand exchange. HJ branch migration catalyzed by RuvA-RuvB allows RuvC to scan DNA until it finds its consensus sequence, where it cleaves and resolves the cruciform DNA. The protein is Crossover junction endodeoxyribonuclease RuvC of Albidiferax ferrireducens (strain ATCC BAA-621 / DSM 15236 / T118) (Rhodoferax ferrireducens).